The chain runs to 114 residues: Beta-microseminoprotein E1 (114 aa).

Positions 1–20 (MNVLLGGLVIFATFVTLCNG) are cleaved as a signal peptide. Disulfide bonds link Cys-22–Cys-70, Cys-38–Cys-62, Cys-57–Cys-93, Cys-60–Cys-69, and Cys-84–Cys-107.

This sequence belongs to the beta-microseminoprotein family.

Its subcellular location is the secreted. The chain is Beta-microseminoprotein E1 (MSPE) from Saguinus oedipus (Cotton-top tamarin).